The following is a 301-amino-acid chain: GTPase Era (301 aa).

Residues 6–173 (KSGFVAIVGR…LEQTNANLEI (168 aa)) enclose the Era-type G domain. Positions 14–21 (GRPNVGKS) are G1. A GTP-binding site is contributed by 14-21 (GRPNVGKS). The segment at 40 to 44 (QTTRN) is G2. Positions 61–64 (DTPG) are G3. GTP is bound by residues 61–65 (DTPGI) and 123–126 (NKID). Positions 123–126 (NKID) are G4. Positions 152–154 (ISA) are G5. One can recognise a KH type-2 domain in the interval 204 to 282 (TREEVPHSVA…FLEVWVKVQK (79 aa)).

This sequence belongs to the TRAFAC class TrmE-Era-EngA-EngB-Septin-like GTPase superfamily. Era GTPase family. In terms of assembly, monomer.

It localises to the cytoplasm. The protein localises to the cell membrane. Its function is as follows. An essential GTPase that binds both GDP and GTP, with rapid nucleotide exchange. Plays a role in 16S rRNA processing and 30S ribosomal subunit biogenesis and possibly also in cell cycle regulation and energy metabolism. This chain is GTPase Era, found in Listeria monocytogenes serotype 4a (strain HCC23).